We begin with the raw amino-acid sequence, 396 residues long: Large ribosomal subunit protein uL24m (396 aa).

The tract at residues 374 to 396 is disordered; it reads QLSLGGGQEDAATTTSPEQPKVV. A compositionally biased stretch (polar residues) spans 384-396; that stretch reads AATTTSPEQPKVV.

It belongs to the universal ribosomal protein uL24 family. In terms of assembly, component of the mitochondrial large ribosomal subunit (mt-LSU). Mature N.crassa 74S mitochondrial ribosomes consist of a small (37S) and a large (54S) subunit. The 37S small subunit contains a 16S ribosomal RNA (16S mt-rRNA) and 32 different proteins. The 54S large subunit contains a 23S rRNA (23S mt-rRNA) and 42 different proteins. uL24m forms the wall of the exit tunnel.

It is found in the mitochondrion. Its function is as follows. Component of the mitochondrial ribosome (mitoribosome), a dedicated translation machinery responsible for the synthesis of mitochondrial genome-encoded proteins, including at least some of the essential transmembrane subunits of the mitochondrial respiratory chain. The mitoribosomes are attached to the mitochondrial inner membrane and translation products are cotranslationally integrated into the membrane. The sequence is that of Large ribosomal subunit protein uL24m (mrpl40) from Neurospora crassa (strain ATCC 24698 / 74-OR23-1A / CBS 708.71 / DSM 1257 / FGSC 987).